We begin with the raw amino-acid sequence, 388 residues long: Probable tRNA sulfurtransferase (388 aa).

Residues 55–162 form the THUMP domain; sequence VTLDDKLKKI…PEGVLIFTDR (108 aa). Residues 180–181, 205–206, Arg264, Gly286, and Gln295 contribute to the ATP site; these read LL and TF.

It belongs to the ThiI family.

The protein resides in the cytoplasm. The enzyme catalyses [ThiI sulfur-carrier protein]-S-sulfanyl-L-cysteine + a uridine in tRNA + 2 reduced [2Fe-2S]-[ferredoxin] + ATP + H(+) = [ThiI sulfur-carrier protein]-L-cysteine + a 4-thiouridine in tRNA + 2 oxidized [2Fe-2S]-[ferredoxin] + AMP + diphosphate. It carries out the reaction [ThiS sulfur-carrier protein]-C-terminal Gly-Gly-AMP + S-sulfanyl-L-cysteinyl-[cysteine desulfurase] + AH2 = [ThiS sulfur-carrier protein]-C-terminal-Gly-aminoethanethioate + L-cysteinyl-[cysteine desulfurase] + A + AMP + 2 H(+). The protein operates within cofactor biosynthesis; thiamine diphosphate biosynthesis. Functionally, catalyzes the ATP-dependent transfer of a sulfur to tRNA to produce 4-thiouridine in position 8 of tRNAs, which functions as a near-UV photosensor. Also catalyzes the transfer of sulfur to the sulfur carrier protein ThiS, forming ThiS-thiocarboxylate. This is a step in the synthesis of thiazole, in the thiamine biosynthesis pathway. The sulfur is donated as persulfide by IscS. This is Probable tRNA sulfurtransferase from Thermotoga maritima (strain ATCC 43589 / DSM 3109 / JCM 10099 / NBRC 100826 / MSB8).